The chain runs to 218 residues: Small ribosomal subunit protein uS3c (218 aa).

Residues 39-109 form the KH type-2 domain; it reads IRNYVKVNLS…QIRINVTELK (71 aa).

Belongs to the universal ribosomal protein uS3 family. As to quaternary structure, part of the 30S ribosomal subunit.

It is found in the plastid. The protein localises to the chloroplast. This chain is Small ribosomal subunit protein uS3c (rps3), found in Rhodomonas salina (Cryptomonas salina).